Consider the following 137-residue polypeptide: Basic phospholipase A2 3 (137 aa).

A signal peptide spans 1–11; it reads LVAVCVSLLGA. The propeptide occupies 12–19; that stretch reads ANIPPQPL. Cystine bridges form between Cys-30/Cys-89, Cys-44/Cys-136, Cys-46/Cys-62, Cys-61/Cys-117, Cys-68/Cys-110, Cys-78/Cys-103, and Cys-96/Cys-108. Ca(2+) is bound by residues Tyr-45, Gly-47, and Gly-49. The active site involves His-65. Asp-66 contacts Ca(2+). The active site involves Asp-111.

Belongs to the phospholipase A2 family. Group I subfamily. D49 sub-subfamily. In terms of assembly, monomer, or homotrimer. Was firstly described as a trimer, but has been reinterpreted with the possibility of being a monomer. The cofactor is Ca(2+). As to expression, expressed by the venom gland.

The protein localises to the secreted. The enzyme catalyses a 1,2-diacyl-sn-glycero-3-phosphocholine + H2O = a 1-acyl-sn-glycero-3-phosphocholine + a fatty acid + H(+). Its function is as follows. Snake venom phospholipase A2 (PLA2) that shows anticoagulant and neurotoxic activities. PLA2 catalyzes the calcium-dependent hydrolysis of the 2-acyl groups in 3-sn-phosphoglycerides. The sequence is that of Basic phospholipase A2 3 from Bungarus caeruleus (Indian krait).